The chain runs to 318 residues: Trans-prenyltransferase (318 aa).

A helical transmembrane segment spans residues 1-21 (MLHLIYISIIVVLIIILISYT). Residues Lys85, Arg88, and His122 each contribute to the isopentenyl diphosphate site. Positions 129 and 135 each coordinate Mg(2+). A dimethylallyl diphosphate-binding site is contributed by Arg140. Arg141 provides a ligand contact to isopentenyl diphosphate. The dimethylallyl diphosphate site is built by Lys216, Thr217, and Gln254.

This sequence belongs to the FPP/GGPP synthase family. Asfivirus trans-prenyltransferase subfamily. The cofactor is Mg(2+).

Its subcellular location is the host endoplasmic reticulum. The protein resides in the host membrane. It carries out the reaction isopentenyl diphosphate + dimethylallyl diphosphate = (2E)-geranyl diphosphate + diphosphate. The catalysed reaction is isopentenyl diphosphate + (2E)-geranyl diphosphate = (2E,6E)-farnesyl diphosphate + diphosphate. The enzyme catalyses isopentenyl diphosphate + (2E,6E)-farnesyl diphosphate = (2E,6E,10E)-geranylgeranyl diphosphate + diphosphate. It catalyses the reaction isopentenyl diphosphate + (2E,6E,10E)-geranylgeranyl diphosphate = (2E,6E,10E,14E)-geranylfarnesyl diphosphate + diphosphate. Its pathway is isoprenoid biosynthesis; farnesyl diphosphate biosynthesis; farnesyl diphosphate from geranyl diphosphate and isopentenyl diphosphate: step 1/1. It participates in isoprenoid biosynthesis; geranyl diphosphate biosynthesis; geranyl diphosphate from dimethylallyl diphosphate and isopentenyl diphosphate: step 1/1. The protein operates within isoprenoid biosynthesis; geranylgeranyl diphosphate biosynthesis; geranylgeranyl diphosphate from farnesyl diphosphate and isopentenyl diphosphate: step 1/1. Trans-prenyltransferase that catalyzes the sequential condensation of isopentenyl diphosphate (IPP) with different allylic diphosphates, such as dimethylallyl diphosphate (DMAPP), geranyl diphosphate (GPP), farnesyl diphosphate (FPP) and geranylgeranyl diphosphate (GGPP), farnesyl diphosphate being the best allylic substrate. The sequence is that of Trans-prenyltransferase from African swine fever virus (isolate Tick/Malawi/Lil 20-1/1983) (ASFV).